A 390-amino-acid polypeptide reads, in one-letter code: uncharacterized protein (390 aa).

12 helical membrane passes run I4–L24, G40–I60, T68–P88, F98–I118, I130–A150, F159–I179, V205–G225, V236–I256, G273–V293, A295–F315, L329–Y349, and G356–I376.

It belongs to the major facilitator superfamily.

Its subcellular location is the cell membrane. This is an uncharacterized protein from Bacillus subtilis (strain 168).